Here is a 184-residue protein sequence, read N- to C-terminus: Peptidyl-tRNA hydrolase (184 aa).

TRNA is bound at residue tyrosine 14. Histidine 19 (proton acceptor) is an active-site residue. Residues phenylalanine 60 and asparagine 62 each contribute to the tRNA site.

The protein belongs to the PTH family. Monomer.

Its subcellular location is the cytoplasm. It carries out the reaction an N-acyl-L-alpha-aminoacyl-tRNA + H2O = an N-acyl-L-amino acid + a tRNA + H(+). Its function is as follows. Hydrolyzes ribosome-free peptidyl-tRNAs (with 1 or more amino acids incorporated), which drop off the ribosome during protein synthesis, or as a result of ribosome stalling. In terms of biological role, catalyzes the release of premature peptidyl moieties from peptidyl-tRNA molecules trapped in stalled 50S ribosomal subunits, and thus maintains levels of free tRNAs and 50S ribosomes. This Mesomycoplasma hyopneumoniae (strain 7448) (Mycoplasma hyopneumoniae) protein is Peptidyl-tRNA hydrolase.